The sequence spans 92 residues: Alpha-conotoxin-like Rt20.2 (92 aa).

Positions 1-24 (MPKLEMMLLVLLILPLSYFSAAGG) are cleaved as a signal peptide. Positions 25-45 (QVVQGDLHSDVLARYLQRGDR) are excised as a propeptide. 4-carboxyglutamate is present on glutamate 49. Proline 55 is modified (4-hydroxyproline). 4 cysteine pairs are disulfide-bonded: cysteine 63/cysteine 72, cysteine 68/cysteine 80, cysteine 73/cysteine 90, and cysteine 78/cysteine 92.

The protein belongs to the conotoxin D superfamily. As to quaternary structure, hetero-, homo- or pseudo-homodimer (identical sequence, different post-translational modifications). In terms of tissue distribution, expressed by the venom duct.

Its subcellular location is the secreted. In terms of biological role, alpha-conotoxins act on postsynaptic membranes, they bind to the nicotinic acetylcholine receptors (nAChR) and thus inhibit them. Through its two C-terminal domains, this homodimeric protein would bind to two nAChR allosteric sites, located outside the nAChR C-loop of the principal binding face and at the adjacent binding interface in a clockwise direction. This toxin specifically blocks mammalian neuronal nAChR of the alpha-7/CHRNA7, alpha-3-beta-2/CHRNA3-CHRNB2 and alpha-4-beta-2/CHRNA4-CHRNB2 subtypes. The protein is Alpha-conotoxin-like Rt20.2 of Conus rattus (Rat cone).